A 965-amino-acid polypeptide reads, in one-letter code: MAKGFYISKTLGILGILLGVAAVCTIIALSVVYAQEKNRNAENSAIAPTLPGSTSATTSTTNPAIDESKPWNQYRLPKTLIPDSYQVTLRPYLTPNEQGLYIFKGSSTVRFTCNETTNVIIIHSKKLNYTNKGNHRVALRALGDTPAPNIDTTELVERTEYLVVHLQGSLVKGHQYEMDSEFQGELADDLAGFYRSEYMEGGNKKVVATTQMQAADARKSFPCFDEPAMKASFNITLIHPNNLTALSNMLPKDSRTLQEDPSWNVTEFHPTPKMSTYLLAYIVSEFKYVEAVSPNRVQIRIWARPSAIDEGHGDYALQVTGPILNFFAQHYNTAYPLEKSDQIALPDFNAGAMENWGLVTYRESALVFDPQSSSISNKERVVTVIAHELAHQWFGNLVTVDWWNDLWLNEGFASYVEFLGADYAEPTWNLKDLIVLNDVYRVMAVDALASSHPLSSPANEVNTPAQISELFDSITYSKGASVLRMLSSFLTEDLFKKGLSSYLHTFQYSNTIYLDLWEHLQQAVDSQTAIKLPASVSTIMDRWILQMGFPVITVNTSTGEIYQEHFLLDPTSKPTRPSDFNYLWIVPIPYLKNGKEDHYWLETEKNQSAEFQTSSNEWLLLNINVTGYYQVNYDENNWRKIQNQLQTDLSVIPVINRAQIIHDSFNLASAGKLSITLPLSNTLFLASETEYMPWEAALSSLNYFKLMFDRSEVYGPMKRYLKKQVTPLFAYFKIKTNNWLDRPPTLMEQYNEINAISTACSSGLEECRDLVVGLYSQWMNNSDNNPIHPNLRSTVYCNAIAFGGEEEWNFAWEQFRKATLVNEADKLRSALACSNEVWILNRYLSYTLNPDYIRKQDATSTIVSIANNVVGQTLVWDFVRSNWKKLFEDYGGGSFSFANLIQGVTRRFSSEFELQQLEQFKEDNSATGFGSGTRALEQALEKTKANIKWVKENKDVVLKWFTENS.

The Cytoplasmic segment spans residues 2-8; it reads AKGFYIS. Residues 9–32 form a helical; Signal-anchor for type II membrane protein membrane-spanning segment; it reads KTLGILGILLGVAAVCTIIALSVV. The cytosolic Ser/Thr-rich junction stretch occupies residues 33–68; the sequence is YAQEKNRNAENSAIAPTLPGSTSATTSTTNPAIDES. The Extracellular segment spans residues 33–965; sequence YAQEKNRNAE…VVLKWFTENS (933 aa). A disordered region spans residues 44 to 68; that stretch reads SAIAPTLPGSTSATTSTTNPAIDES. The segment covering 47–64 has biased composition (low complexity); it reads APTLPGSTSATTSTTNPA. The metalloprotease stretch occupies residues 69–965; it reads KPWNQYRLPK…VVLKWFTENS (897 aa). 2 N-linked (GlcNAc...) asparagine glycosylation sites follow: asparagine 114 and asparagine 128. Tyrosine 176 is modified (sulfotyrosine). Asparagine 234, asparagine 242, and asparagine 264 each carry an N-linked (GlcNAc...) asparagine glycan. 351 to 355 contacts substrate; the sequence is GAMEN. Histidine 387 contacts Zn(2+). Glutamate 388 (proton acceptor) is an active-site residue. Zn(2+)-binding residues include histidine 391 and glutamate 410. Residues asparagine 555, asparagine 606, and asparagine 624 are each glycosylated (N-linked (GlcNAc...) asparagine). Residues cysteine 760 and cysteine 767 are joined by a disulfide bond. Asparagine 780 carries an N-linked (GlcNAc...) asparagine glycan. A disulfide bridge connects residues cysteine 797 and cysteine 833. Tyrosine 852 is modified (phosphotyrosine).

It belongs to the peptidase M1 family. In terms of assembly, homodimer. Interacts with SLC6A19. Requires Zn(2+) as cofactor. Sulfated. Post-translationally, N- and O-glycosylated. In terms of processing, may undergo proteolysis and give rise to a soluble form. As to expression, widely distributed throughout the CNS. Particularly abundant in kidney and intestinal microvilli, also detected in lung and liver. Weakly expressed in heart and aorta.

Its subcellular location is the cell membrane. It carries out the reaction Release of an N-terminal amino acid, Xaa-|-Yaa- from a peptide, amide or arylamide. Xaa is preferably Ala, but may be most amino acids including Pro (slow action). When a terminal hydrophobic residue is followed by a prolyl residue, the two may be released as an intact Xaa-Pro dipeptide.. Its function is as follows. Broad specificity aminopeptidase which plays a role in the final digestion of peptides generated from hydrolysis of proteins by gastric and pancreatic proteases. Also involved in the processing of various peptides including peptide hormones, such as angiotensin III and IV, neuropeptides, and chemokines. May also be involved the cleavage of peptides bound to major histocompatibility complex class II molecules of antigen presenting cells. May have a role in angiogenesis and promote cholesterol crystallization. May have a role in amino acid transport by acting as binding partner of amino acid transporter SLC6A19 and regulating its activity. This is Aminopeptidase N (Anpep) from Rattus norvegicus (Rat).